Consider the following 512-residue polypeptide: SNF1-related protein kinase catalytic subunit alpha KIN11 (512 aa).

The region spanning 20–272 (YKLGKTLGIG…IPEIRQHRWF (253 aa)) is the Protein kinase domain. Residues 26 to 34 (LGIGSFGKV) and K49 contribute to the ATP site. D143 acts as the Proton acceptor in catalysis. Position 165 is a phosphoserine (S165). T176 bears the Phosphothreonine; by GRIK1 or GRIK2 mark. The segment at 291–391 (AKKINEEIVQ…GARSQVPVDR (101 aa)) is auto-inhibitory domain (AID). The UBA domain maps to 293–333 (KINEEIVQEVVNMGFDRNQVLESLRNRTQNDATVTYYLLLD). The interval 295–512 (NEEIVQEVVN…AAFLTELRVI (218 aa)) is regulatory domain (RD). The PPI stretch occupies residues 392 to 512 (KWALGLQSHA…AAFLTELRVI (121 aa)). The interval 399–512 (SHAHPREIMN…AAFLTELRVI (114 aa)) is interaction with PAD1 and SKP1. Residues 463 to 511 (AMTSPTVIKFELQLYKAREEKYLLDIQRVNGPQFLFLDLCAAFLTELRV) form the KA1 domain.

The protein belongs to the protein kinase superfamily. CAMK Ser/Thr protein kinase family. SNF1 subfamily. As to quaternary structure, subunit of a probable heterotrimeric complex consisting of an alpha catalytic (KIN10 or KIN11) subunit, and a beta (KINB) and a gamma (KING or SNF4) non-catalytic regulatory subunits. Interacts with KINB2, KINB3, SNF4 and probably with KINB1 and KING1. Interacts with SKP1/ASK1, PAD1 and the N-terminus of PRL1. Potential subunit of a SCF ubiquitin ligase complex consisting of a SNF1-related protein kinase, SKP1 and CUL1. The association of the SCF complex with the proteasome may be mediated by PAD1 and seems to be inhibited by the interaction with PRL1. Interacts with DSP4. Interacts with the begomovirus AL2 protein and the curtovirus L2 protein. Interacts with ATAF1. Interacts with CIPK14. Interacts with FLZ proteins through their FLZ-type zinc finger domains. Interacts with GEBP/STKR1. Interacts with REM4.1 and REM4.2. Interacts with ADK2. Interacts with IDD8. Interacts with FLZ3, FLZ9, TCP3, TCP13, HB21/ZHD3 and HB23/ZHD10. Interacts with WRI1. Interacts with IPK2b. Interacts with FLZ6 and FLZ10. In terms of processing, sumoylated by SIZ1. Phosphorylated at Thr-176 under submergence. Autophosphorylated. Phosphorylated at Thr-176 by GRIK1/SNAK2 and GRIK2/SNAK1. Expressed in roots, shoots, flower buds, flowers, siliques and leaves. Restrictly expressed to the base of the leaf, the vascular tissue, and the hydathodes.

The protein resides in the plastid. It is found in the chloroplast. It localises to the cytoplasm. Its subcellular location is the endoplasmic reticulum. The catalysed reaction is L-seryl-[protein] + ATP = O-phospho-L-seryl-[protein] + ADP + H(+). The enzyme catalyses L-threonyl-[protein] + ATP = O-phospho-L-threonyl-[protein] + ADP + H(+). With respect to regulation, inactivated by the begomovirus AL2 protein or the curtovirus L2 protein. Activated by phosphorylation at Thr-176 by GRIK1/SNAK2 and GRIK2/SNAK1. Inhibited by trehalose-6-phosphate. In terms of biological role, catalytic subunit of the probable trimeric SNF1-related protein kinase (SnRK) complex, a central regulator of cellular energy homeostasis, which, in response to seemingly unrelated darkness, sugar and stress conditions, activates energy-producing pathways and inhibits energy-consuming processes. May play a role in a signal transduction cascade regulating gene expression and carbohydrate metabolism in higher plants. The SnRK complex may also be involved in the regulation of fatty acid synthesis by phosphorylation of acetyl-CoA carboxylase and in assimilation of nitrogen by phosphorylating nitrate reductase. In vitro, KIN11 exhibits kinase activity on sucrose phosphate synthase and the kinase activity is inhibited by PRL1. May be a subunit of a SCF ubiquitin ligase complex and thus be involved in proteasomal ubiquitination. Involved in innate antiviral defenses. Phosphorylates REM4.1 in vitro. Phosphorylates ADK2 in vitro. The sequence is that of SNF1-related protein kinase catalytic subunit alpha KIN11 from Arabidopsis thaliana (Mouse-ear cress).